A 319-amino-acid polypeptide reads, in one-letter code: Ferrochelatase (319 aa).

Positions 194 and 275 each coordinate Fe cation.

This sequence belongs to the ferrochelatase family.

It is found in the cytoplasm. It catalyses the reaction heme b + 2 H(+) = protoporphyrin IX + Fe(2+). The protein operates within porphyrin-containing compound metabolism; protoheme biosynthesis; protoheme from protoporphyrin-IX: step 1/1. In terms of biological role, catalyzes the ferrous insertion into protoporphyrin IX. This is Ferrochelatase from Hamiltonella defensa subsp. Acyrthosiphon pisum (strain 5AT).